We begin with the raw amino-acid sequence, 259 residues long: MNRLYPHPIIAREGWPIIGGGLALSLLVSMCCGWWSLPFWVFTVFALQFFRDPAREIPQNPEAVLSPVDGRIVVVERARDPYRDVDALKISIFMNVFNVHSQKSPADCTVTKVVYNKGKFVNADLDKASTENERNAVLATTASGREITFVQVAGLVARRILCYTQAGAKLSRGERYGFIRFGSRVDVYLPVDAQAQVAIGDKVTGVKTVLARLPLTDSQADPVSQAASVETAANPSAEQQQIEAAAAKIQAAVQDVLKD.

Serine 183 functions as the Schiff-base intermediate with substrate; via pyruvic acid in the catalytic mechanism. Residue serine 183 is modified to Pyruvic acid (Ser); by autocatalysis.

Belongs to the phosphatidylserine decarboxylase family. PSD-A subfamily. Heterodimer of a large membrane-associated beta subunit and a small pyruvoyl-containing alpha subunit. The cofactor is pyruvate. In terms of processing, is synthesized initially as an inactive proenzyme. Formation of the active enzyme involves a self-maturation process in which the active site pyruvoyl group is generated from an internal serine residue via an autocatalytic post-translational modification. Two non-identical subunits are generated from the proenzyme in this reaction, and the pyruvate is formed at the N-terminus of the alpha chain, which is derived from the carboxyl end of the proenzyme. The post-translation cleavage follows an unusual pathway, termed non-hydrolytic serinolysis, in which the side chain hydroxyl group of the serine supplies its oxygen atom to form the C-terminus of the beta chain, while the remainder of the serine residue undergoes an oxidative deamination to produce ammonia and the pyruvoyl prosthetic group on the alpha chain.

The protein resides in the cell membrane. The enzyme catalyses a 1,2-diacyl-sn-glycero-3-phospho-L-serine + H(+) = a 1,2-diacyl-sn-glycero-3-phosphoethanolamine + CO2. The protein operates within phospholipid metabolism; phosphatidylethanolamine biosynthesis; phosphatidylethanolamine from CDP-diacylglycerol: step 2/2. Catalyzes the formation of phosphatidylethanolamine (PtdEtn) from phosphatidylserine (PtdSer). The protein is Phosphatidylserine decarboxylase proenzyme of Neisseria gonorrhoeae (strain NCCP11945).